Consider the following 499-residue polypeptide: Protein NODULATION SIGNALING PATHWAY 2 (499 aa).

The tract at residues 64–106 is disordered; the sequence is NNTGPAFSDHTASTTSEEEEEEEATTTTMTTTTTTTTTTPEAA. The span at 88–104 shows a compositional bias: low complexity; the sequence is TTTTMTTTTTTTTTTPE. Positions 106 to 491 constitute a GRAS domain; it reads ADDDFKGLRL…RRLLSASLWT (386 aa). The tract at residues 113–182 is leucine repeat I (LRI); that stretch reads LRLVHLLMAG…AGGAYNSSSK (70 aa). The segment at 201–265 is VHIID; the sequence is FQLLQDMSPY…PNGPHLRITA (65 aa). The VHIID signature appears at 232-236; the sequence is VHIVD. Residues 281–313 are leucine repeat II (LRII); the sequence is ETGRRLTAFATSLGQPFSFHHSRLESDETFRPA. The segment at 323–414 is PFYRE; sequence LVFNCMLNLP…RVFLGPRIVG (92 aa). The SAW stretch occupies residues 417 to 491; that stretch reads ARIYRTGGGG…RRLLSASLWT (75 aa).

Belongs to the GRAS family. As to quaternary structure, interacts with IPN2. Binds to RAD1. Interacts with RAM1. Highly expressed in roots.

It localises to the nucleus membrane. The protein localises to the endoplasmic reticulum. In terms of biological role, transcriptional regulator essential for Nod-factor-induced gene expression. Acts downstream of calcium spiking and a calcium/calmodulin-dependent protein kinase required for activation of early nodulation gene expression. Transcription factor involved in the induction of NIN and ENOD40 genes, which are required for rhizobial infection and early nodule development. Does not seem to contribute to the early steps of the arbuscular mycorrhizal fungus infection and colonization processes in roots. Transcription factor involved in the positive regulation of the beta-carotene isomerase D27, which participates in a pathway leading to biosynthesis of strigolactones in roots. The sequence is that of Protein NODULATION SIGNALING PATHWAY 2 from Lotus japonicus (Lotus corniculatus var. japonicus).